The chain runs to 168 residues: uncharacterized protein (168 aa).

A mitochondrion-targeting transit peptide spans 1 to 29; it reads MGWRFPSPSPRQASPVAPLLAAPTAVRSC. The span at 98–110 shows a compositional bias: basic and acidic residues; the sequence is GETKARRAREEGK. Positions 98–152 are disordered; sequence GETKARRAREEGKLPSLGNAPAPRRRSVAWPAAEGSCAAPESSPPASEASLPAPE. Residues 128–152 are compositionally biased toward low complexity; sequence PAAEGSCAAPESSPPASEASLPAPE.

Its subcellular location is the mitochondrion. This is an uncharacterized protein from Homo sapiens (Human).